We begin with the raw amino-acid sequence, 148 residues long: Lysozyme C (148 aa).

Positions 1–18 (MKVLVILGLVLLSVMVQG) are cleaved as a signal peptide. Residues 19–148 (KVFERCELAR…VSQYVQGCGV (130 aa)) enclose the C-type lysozyme domain. 4 disulfides stabilise this stretch: cysteine 24–cysteine 146, cysteine 48–cysteine 134, cysteine 83–cysteine 99, and cysteine 95–cysteine 113. Residues glutamate 53 and aspartate 71 contribute to the active site.

Belongs to the glycosyl hydrolase 22 family. Monomer.

Its subcellular location is the secreted. It catalyses the reaction Hydrolysis of (1-&gt;4)-beta-linkages between N-acetylmuramic acid and N-acetyl-D-glucosamine residues in a peptidoglycan and between N-acetyl-D-glucosamine residues in chitodextrins.. In terms of biological role, lysozymes have primarily a bacteriolytic function; those in tissues and body fluids are associated with the monocyte-macrophage system and enhance the activity of immunoagents. In Saimiri sciureus (Common squirrel monkey), this protein is Lysozyme C (LYZ).